Reading from the N-terminus, the 418-residue chain is uncharacterized protein (418 aa).

A disordered region spans residues 1-24; that stretch reads MSGTAGFITVSPGPPTEAPGGFPR.

To A.pernix APE_1276 and S.solfataricus SSO2105.

This is an uncharacterized protein from Aeropyrum pernix (strain ATCC 700893 / DSM 11879 / JCM 9820 / NBRC 100138 / K1).